Here is a 123-residue protein sequence, read N- to C-terminus: UPF0102 protein PSEEN4497 (123 aa).

Belongs to the UPF0102 family.

In Pseudomonas entomophila (strain L48), this protein is UPF0102 protein PSEEN4497.